The sequence spans 323 residues: 8-oxo-dGDP phosphatase NUDT18 (323 aa).

Residues 37-167 (RLRKNVCYVV…DILHLVELAA (131 aa)) form the Nudix hydrolase domain. Position 58 (leucine 58) interacts with Mg(2+). The Nudix box signature appears at 76-97 (GRMEPGETIVEALQREVKEEAG).

The protein belongs to the Nudix hydrolase family. Mn(2+) serves as cofactor. It depends on Mg(2+) as a cofactor.

It carries out the reaction 8-oxo-dGDP + H2O = 8-oxo-dGMP + phosphate + H(+). The catalysed reaction is 8-oxo-dADP + H2O = 8-oxo-dAMP + phosphate + H(+). It catalyses the reaction 2-oxo-dADP + H2O = 2-oxo-dAMP + phosphate + H(+). The enzyme catalyses 8-oxo-GDP + H2O = 8-oxo-GMP + phosphate + H(+). Mediates the hydrolysis of oxidized nucleoside diphosphate derivatives. Hydrolyzes 8-oxo-7,8-dihydroguanine (8-oxo-Gua)-containing deoxyribo- and ribonucleoside diphosphates to the monophosphates. Hydrolyzes 8-oxo-dGDP and 8-oxo-GDP with the same efficiencies. Also hydrolyzes 8-OH-dADP and 2-OH-dADP. Exhibited no or minimal hydrolysis activity against 8-oxo-dGTP, 8-oxo-GTP, dGTP, GTP, dGDP and GDP. Probably removes oxidized guanine nucleotides from both the DNA and RNA precursor pools. The polypeptide is 8-oxo-dGDP phosphatase NUDT18 (Homo sapiens (Human)).